A 673-amino-acid chain; its full sequence is UvrABC system protein B (673 aa).

The 389-residue stretch at 26–414 (EGLEDGLAHQ…GGDVVDQVVR (389 aa)) folds into the Helicase ATP-binding domain. 39-46 (GVTGSGKT) lines the ATP pocket. A Beta-hairpin motif is present at residues 92 to 115 (YYDYYQPEAYVPSSDTFIEKDASV). Residues 431–597 (QVDDLLSEIR…GLNKKVVDIL (167 aa)) enclose the Helicase C-terminal domain. Positions 633 to 668 (LQKIHELEGLMMQHAQNLEFEEAAQIRDQLHQLREL) constitute a UVR domain.

Belongs to the UvrB family. As to quaternary structure, forms a heterotetramer with UvrA during the search for lesions. Interacts with UvrC in an incision complex.

It localises to the cytoplasm. The UvrABC repair system catalyzes the recognition and processing of DNA lesions. A damage recognition complex composed of 2 UvrA and 2 UvrB subunits scans DNA for abnormalities. Upon binding of the UvrA(2)B(2) complex to a putative damaged site, the DNA wraps around one UvrB monomer. DNA wrap is dependent on ATP binding by UvrB and probably causes local melting of the DNA helix, facilitating insertion of UvrB beta-hairpin between the DNA strands. Then UvrB probes one DNA strand for the presence of a lesion. If a lesion is found the UvrA subunits dissociate and the UvrB-DNA preincision complex is formed. This complex is subsequently bound by UvrC and the second UvrB is released. If no lesion is found, the DNA wraps around the other UvrB subunit that will check the other stand for damage. This is UvrABC system protein B from Shigella dysenteriae serotype 1 (strain Sd197).